We begin with the raw amino-acid sequence, 296 residues long: NADH-cytochrome b5 reductase 1 (296 aa).

A helical membrane pass occupies residues 11 to 31; that stretch reads LSAVLVKFAPFAVAVIAILAA. Residues 47–152 enclose the FAD-binding FR-type domain; that stretch reads SEFQNFVLKE…RGPKGAMVYT (106 aa). FAD-binding positions include 132–147 and 158–195; these read TTLK…GPKG and HIGM…KIDL.

The protein belongs to the flavoprotein pyridine nucleotide cytochrome reductase family. As to quaternary structure, monomer. Component of the 2-(3-amino-3-carboxypropyl)histidine synthase complex composed of dph1, dph2, dph3 and a NADH-dependent reductase, predominantly cbr1. FAD serves as cofactor.

It is found in the mitochondrion outer membrane. The enzyme catalyses 2 Fe(III)-[cytochrome b5] + NADH = 2 Fe(II)-[cytochrome b5] + NAD(+) + H(+). The catalysed reaction is 2 Fe(3+)-[Dph3] + NADH = 2 Fe(2+)-[Dph3] + NAD(+) + H(+). It functions in the pathway protein modification; peptidyl-diphthamide biosynthesis. Its function is as follows. NADH-dependent reductase for dph3 and cytochrome b5. Required for the first step of diphthamide biosynthesis, a post-translational modification of histidine which occurs in elongation factor 2. Dph1 and dph2 transfer a 3-amino-3-carboxypropyl (ACP) group from S-adenosyl-L-methionine (SAM) to a histidine residue, the reaction is assisted by a reduction system comprising dph3 and a NADH-dependent reductase, predominantly cbr1. By reducing dph3, also involved in the formation of the tRNA wobble base modification mcm5s 2U (5-methoxycarbonylmethyl-2-thiouridine), mediated by the elongator complex. The cytochrome b5/NADH cytochrome b5 reductase electron transfer system supports the catalytic activity of several sterol biosynthetic enzymes. In Aspergillus terreus (strain NIH 2624 / FGSC A1156), this protein is NADH-cytochrome b5 reductase 1 (cbr1).